A 274-amino-acid polypeptide reads, in one-letter code: 4-hydroxy-3-methylbut-2-enyl diphosphate reductase (274 aa).

Cys12 is a [4Fe-4S] cluster binding site. Positions 36 and 70 each coordinate (2E)-4-hydroxy-3-methylbut-2-enyl diphosphate. Dimethylallyl diphosphate is bound by residues His36 and His70. 2 residues coordinate isopentenyl diphosphate: His36 and His70. Cys92 is a binding site for [4Fe-4S] cluster. His120 contributes to the (2E)-4-hydroxy-3-methylbut-2-enyl diphosphate binding site. His120 is a binding site for dimethylallyl diphosphate. His120 lines the isopentenyl diphosphate pocket. The Proton donor role is filled by Glu122. Thr158 lines the (2E)-4-hydroxy-3-methylbut-2-enyl diphosphate pocket. [4Fe-4S] cluster is bound at residue Cys186. Positions 214, 215, 216, and 258 each coordinate (2E)-4-hydroxy-3-methylbut-2-enyl diphosphate. Residues Ser214, Ser215, Asn216, and Ser258 each contribute to the dimethylallyl diphosphate site. Isopentenyl diphosphate-binding residues include Ser214, Ser215, Asn216, and Ser258.

It belongs to the IspH family. [4Fe-4S] cluster serves as cofactor.

It carries out the reaction isopentenyl diphosphate + 2 oxidized [2Fe-2S]-[ferredoxin] + H2O = (2E)-4-hydroxy-3-methylbut-2-enyl diphosphate + 2 reduced [2Fe-2S]-[ferredoxin] + 2 H(+). It catalyses the reaction dimethylallyl diphosphate + 2 oxidized [2Fe-2S]-[ferredoxin] + H2O = (2E)-4-hydroxy-3-methylbut-2-enyl diphosphate + 2 reduced [2Fe-2S]-[ferredoxin] + 2 H(+). The protein operates within isoprenoid biosynthesis; dimethylallyl diphosphate biosynthesis; dimethylallyl diphosphate from (2E)-4-hydroxy-3-methylbutenyl diphosphate: step 1/1. It functions in the pathway isoprenoid biosynthesis; isopentenyl diphosphate biosynthesis via DXP pathway; isopentenyl diphosphate from 1-deoxy-D-xylulose 5-phosphate: step 6/6. Its function is as follows. Catalyzes the conversion of 1-hydroxy-2-methyl-2-(E)-butenyl 4-diphosphate (HMBPP) into a mixture of isopentenyl diphosphate (IPP) and dimethylallyl diphosphate (DMAPP). Acts in the terminal step of the DOXP/MEP pathway for isoprenoid precursor biosynthesis. This is 4-hydroxy-3-methylbut-2-enyl diphosphate reductase from Helicobacter pylori (strain Shi470).